The chain runs to 127 residues: MVLPQRHRLRGRGVFDYIYQRGQRFQQGLLQLRVADAATNLLREPPETLEGELRFGVVISSKVSKRAVKRNRLRRLLHEAFLRQTFRSDLPPTWLLLNLRPGAVELSDDNLLEEWSTLIQRAGLTDS.

This sequence belongs to the RnpA family. In terms of assembly, consists of a catalytic RNA component (M1 or rnpB) and a protein subunit.

It carries out the reaction Endonucleolytic cleavage of RNA, removing 5'-extranucleotides from tRNA precursor.. RNaseP catalyzes the removal of the 5'-leader sequence from pre-tRNA to produce the mature 5'-terminus. It can also cleave other RNA substrates such as 4.5S RNA. The protein component plays an auxiliary but essential role in vivo by binding to the 5'-leader sequence and broadening the substrate specificity of the ribozyme. This Synechococcus sp. (strain RCC307) protein is Ribonuclease P protein component.